Consider the following 478-residue polypeptide: Protein nucleotidyltransferase YdiU (478 aa).

Residues G84, G86, R87, K107, D119, G120, R170, and R177 each contribute to the ATP site. D246 (proton acceptor) is an active-site residue. Residues N247 and D256 each coordinate Mg(2+). D256 lines the ATP pocket.

This sequence belongs to the SELO family. Requires Mg(2+) as cofactor. It depends on Mn(2+) as a cofactor.

It carries out the reaction L-seryl-[protein] + ATP = 3-O-(5'-adenylyl)-L-seryl-[protein] + diphosphate. The catalysed reaction is L-threonyl-[protein] + ATP = 3-O-(5'-adenylyl)-L-threonyl-[protein] + diphosphate. The enzyme catalyses L-tyrosyl-[protein] + ATP = O-(5'-adenylyl)-L-tyrosyl-[protein] + diphosphate. It catalyses the reaction L-histidyl-[protein] + UTP = N(tele)-(5'-uridylyl)-L-histidyl-[protein] + diphosphate. It carries out the reaction L-seryl-[protein] + UTP = O-(5'-uridylyl)-L-seryl-[protein] + diphosphate. The catalysed reaction is L-tyrosyl-[protein] + UTP = O-(5'-uridylyl)-L-tyrosyl-[protein] + diphosphate. Its function is as follows. Nucleotidyltransferase involved in the post-translational modification of proteins. It can catalyze the addition of adenosine monophosphate (AMP) or uridine monophosphate (UMP) to a protein, resulting in modifications known as AMPylation and UMPylation. This chain is Protein nucleotidyltransferase YdiU, found in Shigella sonnei (strain Ss046).